A 780-amino-acid polypeptide reads, in one-letter code: Ral guanine nucleotide dissociation stimulator-like 2 (780 aa).

A disordered region spans residues 1–92 (MLPRPLRLLW…PTPPPRSSRR (92 aa)). Position 13 is a phosphoserine (S13). Residues 31–42 (GGGPGGRGVGGG) are compositionally biased toward gly residues. Residues 43 to 65 (QEEEEEEEEDEAPVSVWDEEEDG) are compositionally biased toward acidic residues. Positions 89–213 (SSRRLRAGTL…GSADLIRNLR (125 aa)) constitute an N-terminal Ras-GEF domain. The Ras-GEF domain maps to 244-516 (LADHLAEQLT…HRVSCEVEPP (273 aa)). The segment covering 596-613 (HSLADPSHLSPPASSPRP) has biased composition (low complexity). 2 disordered regions span residues 596 to 651 (HSLA…GASD) and 741 to 769 (TATLGLTSSPSASGTPPSEGGGGSFPRIK). The Ras-associating domain maps to 651–738 (DCRIIRVQME…HDFLLRQRRR (88 aa)). The span at 741 to 758 (TATLGLTSSPSASGTPPS) shows a compositional bias: low complexity.

As to quaternary structure, interacts with SAMD9.

Its function is as follows. Probable guanine nucleotide exchange factor. Putative effector of Ras and/or Rap. Associates with the GTP-bound form of Rap 1A and H-Ras in vitro. The chain is Ral guanine nucleotide dissociation stimulator-like 2 (RGL2) from Canis lupus familiaris (Dog).